We begin with the raw amino-acid sequence, 177 residues long: Large ribosomal subunit protein uL6 (177 aa).

This sequence belongs to the universal ribosomal protein uL6 family. As to quaternary structure, part of the 50S ribosomal subunit.

In terms of biological role, this protein binds to the 23S rRNA, and is important in its secondary structure. It is located near the subunit interface in the base of the L7/L12 stalk, and near the tRNA binding site of the peptidyltransferase center. The sequence is that of Large ribosomal subunit protein uL6 from Vibrio atlanticus (strain LGP32) (Vibrio splendidus (strain Mel32)).